An 82-amino-acid polypeptide reads, in one-letter code: Cytochrome b559 subunit alpha (82 aa).

A helical transmembrane segment spans residues 21 to 35; sequence VIHSITVPALFIAGW. Heme is bound at residue His-23.

The protein belongs to the PsbE/PsbF family. As to quaternary structure, heterodimer of an alpha subunit and a beta subunit. PSII is composed of 1 copy each of membrane proteins PsbA, PsbB, PsbC, PsbD, PsbE, PsbF, PsbH, PsbI, PsbJ, PsbK, PsbL, PsbM, PsbT, PsbX, PsbY, PsbZ, Psb30/Ycf12, at least 3 peripheral proteins of the oxygen-evolving complex and a large number of cofactors. It forms dimeric complexes. Heme b is required as a cofactor.

It localises to the plastid. Its subcellular location is the chloroplast thylakoid membrane. This b-type cytochrome is tightly associated with the reaction center of photosystem II (PSII). PSII is a light-driven water:plastoquinone oxidoreductase that uses light energy to abstract electrons from H(2)O, generating O(2) and a proton gradient subsequently used for ATP formation. It consists of a core antenna complex that captures photons, and an electron transfer chain that converts photonic excitation into a charge separation. This chain is Cytochrome b559 subunit alpha, found in Chlamydomonas reinhardtii (Chlamydomonas smithii).